Reading from the N-terminus, the 250-residue chain is Small ribosomal subunit protein uS2 (250 aa).

This sequence belongs to the universal ribosomal protein uS2 family.

In Chloroherpeton thalassium (strain ATCC 35110 / GB-78), this protein is Small ribosomal subunit protein uS2.